Consider the following 184-residue polypeptide: Photosystem I assembly protein Ycf4 (184 aa).

Transmembrane regions (helical) follow at residues 22-42 and 57-77; these read FCWA…GTSS and IIFF…LFIS.

Belongs to the Ycf4 family.

The protein localises to the plastid. It is found in the chloroplast thylakoid membrane. In terms of biological role, seems to be required for the assembly of the photosystem I complex. This chain is Photosystem I assembly protein Ycf4, found in Draba nemorosa (Woodland whitlowgrass).